The chain runs to 444 residues: Serine--tRNA ligase (444 aa).

248–250 (TSE) lines the L-serine pocket. 279–281 (RSE) contacts ATP. Residue Glu302 coordinates L-serine. 366–369 (EISS) serves as a coordination point for ATP. Residue Ser401 coordinates L-serine.

This sequence belongs to the class-II aminoacyl-tRNA synthetase family. Type-1 seryl-tRNA synthetase subfamily. As to quaternary structure, homodimer. The tRNA molecule binds across the dimer.

It localises to the cytoplasm. It catalyses the reaction tRNA(Ser) + L-serine + ATP = L-seryl-tRNA(Ser) + AMP + diphosphate + H(+). It carries out the reaction tRNA(Sec) + L-serine + ATP = L-seryl-tRNA(Sec) + AMP + diphosphate + H(+). It functions in the pathway aminoacyl-tRNA biosynthesis; selenocysteinyl-tRNA(Sec) biosynthesis; L-seryl-tRNA(Sec) from L-serine and tRNA(Sec): step 1/1. In terms of biological role, catalyzes the attachment of serine to tRNA(Ser). Is also able to aminoacylate tRNA(Sec) with serine, to form the misacylated tRNA L-seryl-tRNA(Sec), which will be further converted into selenocysteinyl-tRNA(Sec). The chain is Serine--tRNA ligase from Polaromonas naphthalenivorans (strain CJ2).